Consider the following 518-residue polypeptide: MIEDISKKIAWLKKNPKMLKGIFRGIERETLRIQKNGHFSKTIHPYLIGSSLTHKWITTDFSENLLEFITPTSDNIDYLLSFLTDLHSFTASKIKNERMWPFSIPYCFNDQTNIQIAQYGKSNIGKMKTTYRIGLKNRYGDLINTISGIHYNFSLPLFFWTNWENNQNKKNNTDLISSGYLNLIRNYYRFGWIVPYLFGSSPAISSFFLKNTKKKYKFKKNKEDIFYLPWSTSLRLSDIGYSNTNILDLNIMFNDFNEYIESFQNALKTPSKKFINIGLKDEHGNFKQLNTNILQIENELYTQIRPKRKTKDGESLLEALKNRGIEYVEIRSLDVNPFSPIGINKNQILLLDLFLIWCALIDSPKIDKTDFLLTTKNWERIIYEGRKPNQKIYINNNNETKTLIEIGQIIFKDLNEIALILDSNSNDLLYQKACKETQLFLKNPELTYSAQCLNFLMTTGIKKTGLYLANKYHEKFINKNYFNLNQSVLEQEVIRSHQKKIEIEREDILSFEEYIRNK.

The protein belongs to the glutamate--cysteine ligase type 1 family. Type 1 subfamily.

The enzyme catalyses L-cysteine + L-glutamate + ATP = gamma-L-glutamyl-L-cysteine + ADP + phosphate + H(+). It participates in sulfur metabolism; glutathione biosynthesis; glutathione from L-cysteine and L-glutamate: step 1/2. The sequence is that of Glutamate--cysteine ligase (gshA) from Buchnera aphidicola subsp. Acyrthosiphon pisum (strain APS) (Acyrthosiphon pisum symbiotic bacterium).